A 305-amino-acid polypeptide reads, in one-letter code: Acetaldehyde dehydrogenase 5 (305 aa).

11-14 (SGNI) contributes to the NAD(+) binding site. The active-site Acyl-thioester intermediate is the cysteine 130. NAD(+) is bound by residues 161–169 (SIGPGTRAN) and asparagine 272.

Belongs to the acetaldehyde dehydrogenase family.

The enzyme catalyses acetaldehyde + NAD(+) + CoA = acetyl-CoA + NADH + H(+). This chain is Acetaldehyde dehydrogenase 5, found in Dechloromonas aromatica (strain RCB).